The primary structure comprises 269 residues: 2-dehydro-3-deoxyphosphooctonate aldolase (269 aa).

The protein belongs to the KdsA family.

It is found in the cytoplasm. It catalyses the reaction D-arabinose 5-phosphate + phosphoenolpyruvate + H2O = 3-deoxy-alpha-D-manno-2-octulosonate-8-phosphate + phosphate. It participates in carbohydrate biosynthesis; 3-deoxy-D-manno-octulosonate biosynthesis; 3-deoxy-D-manno-octulosonate from D-ribulose 5-phosphate: step 2/3. The protein operates within bacterial outer membrane biogenesis; lipopolysaccharide biosynthesis. This is 2-dehydro-3-deoxyphosphooctonate aldolase from Chlamydia trachomatis serovar A (strain ATCC VR-571B / DSM 19440 / HAR-13).